A 296-amino-acid chain; its full sequence is Formamidopyrimidine-DNA glycosylase (296 aa).

Residue Pro2 is the Schiff-base intermediate with DNA of the active site. Catalysis depends on Glu3, which acts as the Proton donor. The active-site Proton donor; for beta-elimination activity is the Lys58. 3 residues coordinate DNA: His104, Arg126, and Lys169. An FPG-type zinc finger spans residues 260-296 (SVYDREGQACGTPGCGGTVARIVQAGRSTFYCAACQK). Catalysis depends on Arg286, which acts as the Proton donor; for delta-elimination activity.

Belongs to the FPG family. In terms of assembly, monomer. Zn(2+) is required as a cofactor.

It carries out the reaction Hydrolysis of DNA containing ring-opened 7-methylguanine residues, releasing 2,6-diamino-4-hydroxy-5-(N-methyl)formamidopyrimidine.. The enzyme catalyses 2'-deoxyribonucleotide-(2'-deoxyribose 5'-phosphate)-2'-deoxyribonucleotide-DNA = a 3'-end 2'-deoxyribonucleotide-(2,3-dehydro-2,3-deoxyribose 5'-phosphate)-DNA + a 5'-end 5'-phospho-2'-deoxyribonucleoside-DNA + H(+). In terms of biological role, involved in base excision repair of DNA damaged by oxidation or by mutagenic agents. Acts as a DNA glycosylase that recognizes and removes damaged bases. Has a preference for oxidized purines, such as 7,8-dihydro-8-oxoguanine (8-oxoG). Has AP (apurinic/apyrimidinic) lyase activity and introduces nicks in the DNA strand. Cleaves the DNA backbone by beta-delta elimination to generate a single-strand break at the site of the removed base with both 3'- and 5'-phosphates. This is Formamidopyrimidine-DNA glycosylase from Rhizobium etli (strain ATCC 51251 / DSM 11541 / JCM 21823 / NBRC 15573 / CFN 42).